The primary structure comprises 597 residues: Peptidyl-prolyl cis-trans isomerase-like 2 (597 aa).

The U-box domain occupies 41 to 114 (KKLPFNFCAA…TTDSDENKGD (74 aa)). A PPIase cyclophilin-type domain is found at 328–483 (NKGYVRMETN…NKIVIKDMII (156 aa)). The segment covering 495-519 (KKQKEGEEERKREVARQGGTEDDRT) has biased composition (basic and acidic residues). Disordered regions lie at residues 495-521 (KKQK…RTTW) and 560-597 (ATTT…FDGW).

Belongs to the cyclophilin-type PPIase family. PPIL2 subfamily.

The protein resides in the nucleus. The enzyme catalyses [protein]-peptidylproline (omega=180) = [protein]-peptidylproline (omega=0). It carries out the reaction S-ubiquitinyl-[E2 ubiquitin-conjugating enzyme]-L-cysteine + [acceptor protein]-L-lysine = [E2 ubiquitin-conjugating enzyme]-L-cysteine + N(6)-ubiquitinyl-[acceptor protein]-L-lysine.. It functions in the pathway protein modification; protein ubiquitination. May catalyze the cis-trans isomerization of proline imidic peptide bonds in oligopeptides thereby assisting the folding of proteins. May also function as a chaperone, playing a role in intracellular transport of proteins. May also have a protein ubiquitin ligase activity acting as an E3 ubiquitin protein ligase or as a ubiquitin-ubiquitin ligase promoting elongation of ubiquitin chains on proteins. The chain is Peptidyl-prolyl cis-trans isomerase-like 2 (ppi-2) from Neurospora crassa (strain ATCC 24698 / 74-OR23-1A / CBS 708.71 / DSM 1257 / FGSC 987).